The following is a 305-amino-acid chain: MSGALLWAKAEAQRISSALVTGTTNMVDAELKLAQKLHGRVRDYVQWHHQDERCRKGISVLEYGPGTVRAFQQKTLPLVIGLRGETSRCTLVDRSREFLGDIAQLSSALGLKIEFIRGDIFSGRRYFCDDEAAFIVMFGRTFGNLAVPTNDTHPMEAVVETLKKISNSAKRCWVAISIGSDLRRDVAKSYYEAHPEFQLNVFYRMKAELPVDGNFDPEAFEYEPDVIGGDQFMQVIHTAVVKKNLDFCIGGKDIILLSGERLHLKNSFCFSESFFKKCAHRAGFVPIDVLSDDAGSAIHVLQKVN.

This is an uncharacterized protein from Sinorhizobium fredii (strain NBRC 101917 / NGR234).